The following is a 599-amino-acid chain: MFS-type transporter ucsM (599 aa).

Basic and acidic residues predominate over residues 23–34; sequence AHHHGKEREAHR. The interval 23–42 is disordered; that stretch reads AHHHGKEREAHRQSLSSVPG. Transmembrane regions (helical) follow at residues 147–167, 178–198, 204–224, 263–283, 291–311, 386–406, 424–444, and 454–474; these read VALG…GAWL, ILIG…GAVP, GKGT…AGLF, IMLI…ATVY, WLAF…LWYL, IFLY…ILPS, FNPI…YPAL, and ISRI…SSLV. N-linked (GlcNAc...) asparagine glycosylation occurs at N517. 2 helical membrane-spanning segments follow: residues 539–559 and 563–583; these read LFLF…PAIV and LVWV…IFWV.

Belongs to the major facilitator superfamily. Proton-dependent oligopeptide transporter (POT/PTR) (TC 2.A.17) family.

The protein localises to the membrane. Its function is as follows. MFS-type transporter; part of the gene cluster that mediates the biosynthesis of UCS1025A, a member of the pyrrolizidinone family that acts as a strong telomerase inhibitor and displays potent antibacterial and antitumor properties. These compounds share a hemiaminal-containing pyrrolizidinone core fused with a gamma-lactone, giving a furopyrrolizidine that is connected to a decalin fragment. The sequence is that of MFS-type transporter ucsM from Acremonium sp.